Consider the following 282-residue polypeptide: Acetyl-coenzyme A carboxylase carboxyl transferase subunit beta (282 aa).

The CoA carboxyltransferase N-terminal domain occupies 29–282 (LMKRCPNCGL…LLKYGGMQDD (254 aa)). Residues cysteine 33, cysteine 36, cysteine 51, and cysteine 54 each coordinate Zn(2+). Residues 33-54 (CPNCGLEFFARRLDKYKTCPDC) form a C4-type zinc finger.

This sequence belongs to the AccD/PCCB family. As to quaternary structure, acetyl-CoA carboxylase is a heterohexamer composed of biotin carboxyl carrier protein (AccB), biotin carboxylase (AccC) and two subunits each of ACCase subunit alpha (AccA) and ACCase subunit beta (AccD). Zn(2+) serves as cofactor.

It is found in the cytoplasm. It carries out the reaction N(6)-carboxybiotinyl-L-lysyl-[protein] + acetyl-CoA = N(6)-biotinyl-L-lysyl-[protein] + malonyl-CoA. It functions in the pathway lipid metabolism; malonyl-CoA biosynthesis; malonyl-CoA from acetyl-CoA: step 1/1. Component of the acetyl coenzyme A carboxylase (ACC) complex. Biotin carboxylase (BC) catalyzes the carboxylation of biotin on its carrier protein (BCCP) and then the CO(2) group is transferred by the transcarboxylase to acetyl-CoA to form malonyl-CoA. This chain is Acetyl-coenzyme A carboxylase carboxyl transferase subunit beta, found in Lactobacillus delbrueckii subsp. bulgaricus (strain ATCC 11842 / DSM 20081 / BCRC 10696 / JCM 1002 / NBRC 13953 / NCIMB 11778 / NCTC 12712 / WDCM 00102 / Lb 14).